The sequence spans 499 residues: Glycerol kinase (499 aa).

Thr13 is an ADP binding site. Residues Thr13, Thr14, and Ser15 each contribute to the ATP site. Thr13 contacts sn-glycerol 3-phosphate. An ADP-binding site is contributed by Arg17. The sn-glycerol 3-phosphate site is built by Arg83, Glu84, Tyr136, and Asp246. Glycerol contacts are provided by Arg83, Glu84, Tyr136, Asp246, and Gln247. Residues Thr268 and Gly311 each contribute to the ADP site. Residues Thr268, Gly311, Gln315, and Gly412 each contribute to the ATP site. Residues Gly412 and Asn416 each contribute to the ADP site.

It belongs to the FGGY kinase family.

The enzyme catalyses glycerol + ATP = sn-glycerol 3-phosphate + ADP + H(+). It functions in the pathway polyol metabolism; glycerol degradation via glycerol kinase pathway; sn-glycerol 3-phosphate from glycerol: step 1/1. Its activity is regulated as follows. Inhibited by fructose 1,6-bisphosphate (FBP). Its function is as follows. Key enzyme in the regulation of glycerol uptake and metabolism. Catalyzes the phosphorylation of glycerol to yield sn-glycerol 3-phosphate. This Francisella philomiragia subsp. philomiragia (strain ATCC 25017 / CCUG 19701 / FSC 153 / O#319-036) protein is Glycerol kinase.